Consider the following 143-residue polypeptide: MLDSDARLASDLSLAVMRLARQLRFRNPQSPVSLSQLSALTTLANEGAMTPGALAIRERVRPPSMTRVIASLADMGFVDREPHPVDGRQVLVSVSQSGAELVKAARRARQEWLVERLMTLNSDKRDILRNAADLILELIDESP.

The region spanning 5-137 (DARLASDLSL…LRNAADLILE (133 aa)) is the HTH marR-type domain. Positions 51-74 (PGALAIRERVRPPSMTRVIASLAD) form a DNA-binding region, H-T-H motif.

In terms of assembly, homodimer.

This is an uncharacterized protein from Mycobacterium leprae (strain TN).